We begin with the raw amino-acid sequence, 460 residues long: Muscarinic acetylcholine receptor M1 (460 aa).

The Extracellular segment spans residues 1-22; that stretch reads MNTSAPPAVSPNITVLAPGKGP. Asn-2 and Asn-12 each carry an N-linked (GlcNAc...) asparagine glycan. A helical transmembrane segment spans residues 23-48; the sequence is WQVAFIGITTGLLSLATVTGNLLVLI. Residues 49–62 lie on the Cytoplasmic side of the membrane; the sequence is SFKVNTELKTVNNY. The chain crosses the membrane as a helical span at residues 63–84; that stretch reads FLLSLACADLIIGTFSMNLYTT. Topologically, residues 85 to 95 are extracellular; the sequence is YLLMGHWALGT. A helical membrane pass occupies residues 96–121; the sequence is LACDLWLALDYVASNASVMNLLLISF. Residues Cys-98 and Cys-178 are joined by a disulfide bond. Over 122–142 the chain is Cytoplasmic; sequence DRYFSVTRPLSYRAKRTPRRA. Residues 143–164 form a helical membrane-spanning segment; that stretch reads ALMIGLAWLVSFVLWAPAILFW. Residues 165-185 are Extracellular-facing; the sequence is QYLVGERTVLAGQCYIQFLSQ. The chain crosses the membrane as a helical span at residues 186–209; the sequence is PIITFGTAMAAFYLPVTVMCTLYW. Residues 210–366 are Cytoplasmic-facing; the sequence is RIYRETENRA…LVKEKKAART (157 aa). 3 disordered regions span residues 225 to 256, 274 to 296, and 310 to 351; these read LQGS…ETPP, WKEE…GEEP, and EAQA…QLAK. Position 230 is a phosphothreonine (Thr-230). Positions 238-247 are enriched in low complexity; that stretch reads SSSSERSQPG. Positions 328–343 are enriched in basic residues; that stretch reads RPTRKGRERAGKGQKP. The chain crosses the membrane as a helical span at residues 367-390; that stretch reads LSAILLAFIVTWTPYNIMVLVSTF. The Extracellular segment spans residues 391 to 397; it reads CKDCVPE. The helical transmembrane segment at 398–420 threads the bilayer; the sequence is TLWELGYWLCYVNSTINPMCYAL. Residues 421–460 lie on the Cytoplasmic side of the membrane; sequence CNKAFRDTFRLLLLCRWDKRRWRKIPKRPGSVHRTPSRQC. At Thr-428 the chain carries Phosphothreonine. Ser-451 carries the post-translational modification Phosphoserine. Thr-455 is subject to Phosphothreonine. Ser-457 is subject to Phosphoserine.

This sequence belongs to the G-protein coupled receptor 1 family. Muscarinic acetylcholine receptor subfamily. CHRM1 sub-subfamily. Interacts with GPRASP2. Interacts with TMEM147.

It is found in the cell membrane. The protein localises to the postsynaptic cell membrane. Its function is as follows. The muscarinic acetylcholine receptor mediates various cellular responses, including inhibition of adenylate cyclase, breakdown of phosphoinositides and modulation of potassium channels through the action of G proteins. Primary transducing effect is Pi turnover. In Sus scrofa (Pig), this protein is Muscarinic acetylcholine receptor M1 (CHRM1).